The sequence spans 77 residues: Acyl carrier protein (77 aa).

The Carrier domain maps to 2 to 77 (ASIEKRIKEI…DAIDYITDHT (76 aa)). Position 37 is an O-(pantetheine 4'-phosphoryl)serine (Ser37).

The protein belongs to the acyl carrier protein (ACP) family. 4'-phosphopantetheine is transferred from CoA to a specific serine of apo-ACP by AcpS. This modification is essential for activity because fatty acids are bound in thioester linkage to the sulfhydryl of the prosthetic group.

It is found in the cytoplasm. It functions in the pathway lipid metabolism; fatty acid biosynthesis. In terms of biological role, carrier of the growing fatty acid chain in fatty acid biosynthesis. The sequence is that of Acyl carrier protein from Geobacter sp. (strain M21).